The chain runs to 438 residues: GTPase Obg (438 aa).

Positions 2–160 constitute an Obg domain; sequence SMFLDQVTID…RKIELELKVL (159 aa). Residues 128–147 form a disordered region; it reads NIRFASPRNPAPEIAENGEP. One can recognise an OBG-type G domain in the interval 161-339; sequence ADVGLVGFPS…LLNATADLLE (179 aa). GTP contacts are provided by residues 167–174, 192–196, 214–217, 284–287, and 320–322; these read GFPSVGKS, FTTLV, DLPG, NKMD, and SGV. S174 and T194 together coordinate Mg(2+). One can recognise an OCT domain in the interval 360 to 438; that stretch reads GFQPEGPEFT…IGNFEFEFVE (79 aa).

This sequence belongs to the TRAFAC class OBG-HflX-like GTPase superfamily. OBG GTPase family. Monomer. Requires Mg(2+) as cofactor.

It localises to the cytoplasm. Functionally, an essential GTPase which binds GTP, GDP and possibly (p)ppGpp with moderate affinity, with high nucleotide exchange rates and a fairly low GTP hydrolysis rate. Plays a role in control of the cell cycle, stress response, ribosome biogenesis and in those bacteria that undergo differentiation, in morphogenesis control. This is GTPase Obg from Enterococcus faecalis (strain ATCC 700802 / V583).